A 931-amino-acid polypeptide reads, in one-letter code: Probable ubiquitin-like-specific protease 2B (931 aa).

Residues 204–224 (SLSDRSALSEASDSEDDEEDW) are disordered. The segment covering 215–224 (SDSEDDEEDW) has biased composition (acidic residues). Residues histidine 489, aspartate 522, and cysteine 577 contribute to the active site. The tract at residues 825 to 931 (HEEEIDESPP…PTGEAEEMEK (107 aa)) is disordered. Over residues 839-851 (SLKSATVGSNTAD) the composition is skewed to polar residues. The segment covering 873–904 (NDRDEEKPLEHDLEIGDKTSEDVGDDCDQKEP) has biased composition (basic and acidic residues).

It belongs to the peptidase C48 family.

Protease that catalyzes two essential functions in the SUMO pathway: processing of full-length SUMOs to their mature forms and deconjugation of SUMO from targeted proteins. The chain is Probable ubiquitin-like-specific protease 2B (ULP2B) from Arabidopsis thaliana (Mouse-ear cress).